Reading from the N-terminus, the 319-residue chain is ATP-dependent 6-phosphofructokinase (319 aa).

Residue G11 participates in ATP binding. 21–25 (RAVVR) is an ADP binding site. ATP contacts are provided by residues 72-73 (RC) and 102-105 (GDGS). Mg(2+) is bound at residue D103. 125 to 127 (TID) provides a ligand contact to substrate. The active-site Proton acceptor is the D127. R154 lines the ADP pocket. Residues R162 and 169-171 (MGR) contribute to the substrate site. Residues 185–187 (GAE), R211, and 213–215 (KKH) contribute to the ADP site. Substrate-binding positions include E222, R243, and 249 to 252 (HVQR).

It belongs to the phosphofructokinase type A (PFKA) family. ATP-dependent PFK group I subfamily. Prokaryotic clade 'B1' sub-subfamily. Homotetramer. Mg(2+) serves as cofactor.

The protein resides in the cytoplasm. The enzyme catalyses beta-D-fructose 6-phosphate + ATP = beta-D-fructose 1,6-bisphosphate + ADP + H(+). The protein operates within carbohydrate degradation; glycolysis; D-glyceraldehyde 3-phosphate and glycerone phosphate from D-glucose: step 3/4. With respect to regulation, allosterically activated by ADP and other diphosphonucleosides, and allosterically inhibited by phosphoenolpyruvate. Functionally, catalyzes the phosphorylation of D-fructose 6-phosphate to fructose 1,6-bisphosphate by ATP, the first committing step of glycolysis. This is ATP-dependent 6-phosphofructokinase from Geobacillus sp. (strain WCH70).